Here is a 26-residue protein sequence, read N- to C-terminus: Acetylcholine receptor subunit delta (26 aa).

Belongs to the ligand-gated ion channel (TC 1.A.9) family. Acetylcholine receptor (TC 1.A.9.1) subfamily. Pentamer of two alpha chains, and one each of the beta, delta, and gamma chains.

The protein localises to the postsynaptic cell membrane. It localises to the cell membrane. The catalysed reaction is K(+)(in) = K(+)(out). It catalyses the reaction Na(+)(in) = Na(+)(out). Its function is as follows. After binding acetylcholine, the AChR responds by an extensive change in conformation that affects all subunits and leads to opening of an ion-conducting channel across the plasma membrane. This is Acetylcholine receptor subunit delta (chrnd) from Electrophorus electricus (Electric eel).